We begin with the raw amino-acid sequence, 400 residues long: Lysophospholipid transporter LplT (400 aa).

The next 12 membrane-spanning stretches (helical) occupy residues 19-39, 53-73, 91-111, 139-159, 164-184, 195-213, 227-247, 257-277, 281-301, 304-324, 352-372, and 373-393; these read VIVA…ATLA, VLQM…GQIA, AGAA…LVGI, MMEA…GVLA, IAAL…NLFI, SWRL…VVLW, LFWG…PVAL, YLNA…AKLV, TVSR…IFSL, ALLP…FFVV, NSAM…GVPA, and VAIG…LWIW.

The protein belongs to the major facilitator superfamily. LplT (TC 2.A.1.42) family.

The protein localises to the cell inner membrane. Its function is as follows. Catalyzes the facilitated diffusion of 2-acyl-glycero-3-phosphoethanolamine (2-acyl-GPE) into the cell. The protein is Lysophospholipid transporter LplT of Salmonella paratyphi B (strain ATCC BAA-1250 / SPB7).